The following is an 82-amino-acid chain: Turripeptide Gdm9.1 (82 aa).

Residues 1–23 (MMAKLMITVMMVLLLSLQQGADG) form the signal peptide. A propeptide spanning residues 24 to 46 (RSERWRKNQMAASRIMRNLITAR) is cleaved from the precursor. Residues P49 and P50 each carry the 4-hydroxyproline modification. Intrachain disulfides connect C53-C68, C58-C72, and C64-C79. 4-carboxyglutamate is present on residues E60 and E63.

It belongs to the Pg turripeptide superfamily. Expressed by the venom duct.

It is found in the secreted. The chain is Turripeptide Gdm9.1 from Gemmula diomedea (Gem-turris).